Here is a 245-residue protein sequence, read N- to C-terminus: 3-oxoacyl-[acyl-carrier-protein] reductase FabG (245 aa).

Residues 12–15 (GANR) and threonine 38 each bind NADP(+). Residues lysine 51 and glycine 54 each coordinate Ca(2+). NADP(+) contacts are provided by residues 60–61 (DI) and asparagine 87. Serine 139 provides a ligand contact to substrate. A Ca(2+)-binding site is contributed by asparagine 146. The active-site Proton acceptor is the tyrosine 152. NADP(+)-binding positions include 152-156 (YSAAK) and isoleucine 185. Ca(2+)-binding residues include glutamine 234 and valine 235.

It belongs to the short-chain dehydrogenases/reductases (SDR) family. In terms of assembly, homotetramer.

It carries out the reaction a (3R)-hydroxyacyl-[ACP] + NADP(+) = a 3-oxoacyl-[ACP] + NADPH + H(+). The protein operates within lipid metabolism; fatty acid biosynthesis. Its function is as follows. Catalyzes the NADPH-dependent reduction of beta-ketoacyl-ACP substrates to beta-hydroxyacyl-ACP products, the first reductive step in the elongation cycle of fatty acid biosynthesis. This Buchnera aphidicola subsp. Baizongia pistaciae (strain Bp) protein is 3-oxoacyl-[acyl-carrier-protein] reductase FabG (fabG).